Reading from the N-terminus, the 663-residue chain is Polyunsaturated fatty acid lipoxygenase ALOX15 (663 aa).

Residues 2–115 enclose the PLAT domain; the sequence is GVYRIRVSTG…ILNLPEGTGC (114 aa). One can recognise a Lipoxygenase domain in the interval 116-663; it reads TVVEDSQGLF…PSLVENSVAI (548 aa). Fe cation contacts are provided by histidine 361, histidine 366, histidine 541, histidine 545, and isoleucine 663.

The protein belongs to the lipoxygenase family. As to quaternary structure, interacts with PEBP1; in response to IL13/interleukin-13, prevents the interaction of PEBP1 with RAF1 to activate the ERK signaling cascade. Fe cation is required as a cofactor. In terms of tissue distribution, found in pituitary and pineal glands as well as leukocytes, kidney, aorta, small intestine and cornea. Also expressed by resident peritoneal macrophages (at protein level).

It localises to the cytoplasm. Its subcellular location is the cytosol. The protein resides in the cell membrane. It is found in the lipid droplet. The enzyme catalyses (5Z,8Z,11Z,14Z)-eicosatetraenoate + O2 = (12S)-hydroperoxy-(5Z,8Z,10E,14Z)-eicosatetraenoate. It catalyses the reaction (5Z,8Z,11Z,14Z)-eicosatetraenoate + O2 = (15S)-hydroperoxy-(5Z,8Z,11Z,13E)-eicosatetraenoate. It carries out the reaction (9Z,12Z)-octadecadienoate + O2 = (13S)-hydroperoxy-(9Z,11E)-octadecadienoate. The catalysed reaction is (5Z,8Z,11Z,14Z)-eicosatetraenoate + 2 O2 = (14R,15S)-dihydroperoxy-(5Z,8Z,10E,12E)-eicosatetraenoate. The enzyme catalyses (5Z,8Z,11Z,14Z)-eicosatetraenoate + 2 O2 = (8S,15S)-dihydroperoxy-(5Z,9E,11Z,13E)-eicosatetraenoate. It catalyses the reaction (14S,15R)-epoxy-(5Z,8Z,11Z)-eicosatrienoate + O2 = (8S)-hydroperoxy-(14S,15R)-epoxy-(5Z,9E,11Z)-eicosatrienoate. It carries out the reaction (14S,15R)-epoxy-(5Z,8Z,11Z)-eicosatrienoate + O2 = (12S)-hydroperoxy-(14S,15R)-epoxy-(5Z,8Z,10E)-eicosatrienoate. The catalysed reaction is (14R,15S)-epoxy-(5Z,8Z,11Z)-eicosatrienoate + O2 = (5S)-hydroperoxy-(14R,15S)-epoxy-(6E,8Z,11Z)-eicosatrienoate. The enzyme catalyses (14R,15S)-epoxy-(5Z,8Z,11Z)-eicosatrienoate + O2 = (12S)-hydroperoxy-(14R,15S)-epoxy-(5Z,8Z,10E)-eicosatrienoate. It catalyses the reaction (15R)-hydroperoxy-(5Z,8Z,11Z,13E)-eicosatetraenoate = 15-oxo-(5Z,8Z,11Z,13E)-eicosatetraenoate + H2O. It carries out the reaction (15S)-hydroperoxy-(5Z,8Z,11Z,13E)-eicosatetraenoate = (14S,15S)-epoxy-(5Z,8Z,10E,12E)-eicosatetraenoate + H2O. The catalysed reaction is (12S)-hydroperoxy-(5Z,8Z,10E,14Z)-eicosatetraenoate = (8S)-hydroxy-(11S,12S)-epoxy-(5Z,9E,14Z)-eicosatrienoate. The enzyme catalyses (4Z,7Z,10Z,13Z,16Z)-docosapentaenoate + O2 = 14-hydroperoxy-(4Z,7Z,10Z,12E,16Z)-docosapentaenoate. It catalyses the reaction (7Z,10Z,13Z,16Z,19Z)-docosapentaenoate + O2 = 14-hydroperoxy-(7Z,10Z,12E,16Z,19Z)-docosapentaenoate. It carries out the reaction (4Z,7Z,10Z,13Z,16Z,19Z)-docosahexaenoate + O2 = (14S)-hydroperoxy-(4Z,7Z,10Z,12E,16Z,19Z)-docosahexaenoate. The catalysed reaction is (4Z,7Z,10Z,13Z,16Z,19Z)-docosahexaenoate + O2 = (17S)-hydroperoxy-(4Z,7Z,10Z,13Z,15E,19Z)-docosahexaenoate. The enzyme catalyses (7S)-hydroperoxy-(4Z,8E,10Z,13Z,16Z,19Z)-docosahexaenoate + O2 = (7S,14S)-dihydroperoxy-(4Z,8E,10Z,12E,16Z,19Z)-docosahexaenoate. It catalyses the reaction (7S)-hydroperoxy-(4Z,8E,10Z,13Z,16Z,19Z)-docosahexaenoate + O2 = (7S,17S)-dihydroperoxy-(4Z,8E,10Z,13Z,15E,19Z)-docosahexaenoate. It carries out the reaction (4Z,7Z,10Z,13Z,16Z,19Z)-docosahexaenoate + O2 = (11S)-hydroperoxy-(4Z,7Z,9E,13Z,16Z,19Z)-docosahexaenoate. The catalysed reaction is N-(5Z,8Z,11Z,14Z)-eicosatetraenoyl-taurine + O2 = N-(12S)-hydroperoxy-(5Z,8Z,10E,14Z)-eicosatetraenoyl-taurine. The enzyme catalyses N-(5Z,8Z,11Z,14Z)-eicosatetraenoyl-gamma-aminobutanoate + O2 = N-(12S)-hydroperoxy-(5Z,8Z,10E,14Z)-eicosatetraenoyl-gamma-aminobutanoate. It catalyses the reaction N-(5Z,8Z,11Z,14Z)-eicosatetraenoyl-glycine + O2 = N-(12S)-hydroperoxy-(5Z,8Z,10E,14Z)-eicosatetraenoyl-glycine. It carries out the reaction N-(5Z,8Z,11Z,14Z)-eicosatetraenoyl-L-alanine + O2 = N-(12S)-hydroperoxy-(5Z,8Z,10E,14Z)-eicosatetraenoyl-alanine. The catalysed reaction is N-(5Z,8Z,11Z,14Z)-eicosatetraenoyl-taurine + O2 = N-(15S)-hydroperoxy-(5Z,8Z,11Z,13E)-eicosatetraenoyl-taurine. The enzyme catalyses N-(5Z,8Z,11Z,14Z)-eicosatetraenoyl-gamma-aminobutanoate + O2 = N-(15S)-hydroperoxy-(5Z,8Z,11Z,13E)-eicosatetraenoyl-gamma-aminobutanoate. It catalyses the reaction N-(5Z,8Z,11Z,14Z)-eicosatetraenoyl-glycine + O2 = N-(15S)-hydroperoxy-(5Z,8Z,11Z,13E)-eicosatetraenoyl-glycine. It carries out the reaction N-(5Z,8Z,11Z,14Z)-eicosatetraenoyl-L-alanine + O2 = N-(15S)-hydroperoxy-(5Z,8Z,11Z,13E)-eicosatetraenoyl-alanine. It functions in the pathway lipid metabolism; hydroperoxy eicosatetraenoic acid biosynthesis. Functionally, non-heme iron-containing dioxygenase that catalyzes the stereo-specific peroxidation of free and esterified polyunsaturated fatty acids generating a spectrum of bioactive lipid mediators. It inserts peroxyl groups at C12 or C15 of arachidonate ((5Z,8Z,11Z,14Z)-eicosatetraenoate) producing both 12-hydroperoxyeicosatetraenoate/12-HPETE and 15-hydroperoxyeicosatetraenoate/15-HPETE. It may then act on 12-HPETE to produce hepoxilins, which may show pro-inflammatory properties. Can also peroxidize linoleate ((9Z,12Z)-octadecadienoate) to 13-hydroperoxyoctadecadienoate. May participate in the sequential oxidations of DHA ((4Z,7Z,10Z,13Z,16Z,19Z)-docosahexaenoate) to generate specialized pro-resolving mediators (SPMs)like resolvin D5 ((7S,17S)-diHPDHA) and (7S,14S)-diHPDHA, that actively down-regulate the immune response and have anti-aggregation properties with platelets. Can convert epoxy fatty acids to hydroperoxy-epoxides derivatives followed by an intramolecular nucleophilic substitution leading to the formation of monocyclic endoperoxides. Plays an important role during the maintenance of self-tolerance by peroxidizing membrane-bound phosphatidylethanolamine which can then signal the sorting process for clearance of apoptotic cells during inflammation and prevent an autoimmune response. In addition to its role in the immune and inflammatory responses, this enzyme may play a role in epithelial wound healing in the cornea through production of lipoxin A4 (LXA(4)) and docosahexaenoic acid-derived neuroprotectin D1 (NPD1; 10R,17S-HDHA), both lipid autacoids exhibit anti-inflammatory and neuroprotective properties. Furthermore, it may regulate actin polymerization which is crucial for several biological processes such as the phagocytosis of apoptotic cells. It is also implicated in the generation of endogenous ligands for peroxisome proliferator activated receptor (PPAR-gamma), hence modulating macrophage development and function. It may also exert a negative effect on skeletal development by regulating bone mass through this pathway. As well as participates in ER stress and downstream inflammation in adipocytes, pancreatic islets, and liver. Finally, it is also involved in the cellular response to IL13/interleukin-13. The protein is Polyunsaturated fatty acid lipoxygenase ALOX15 of Mus musculus (Mouse).